Here is a 412-residue protein sequence, read N- to C-terminus: Lipid droplet organization protein LDO45 (412 aa).

Over 1–170 (MAARNRRKNN…TVEKLNALQN (170 aa)) the chain is Cytoplasmic. Residues 171-191 (SLYEVFWIIFIYLNYWFPNVG) form a helical membrane-spanning segment. The Lumenal segment spans residues 192–247 (DYVSNTFGQQDSIIIRISLSKSHFRALREKSSQKVQQAVKNIYFCFQEKPYLTAFK). The helical transmembrane segment at 248–268 (VSFAIGLVIPCSLLFLIMVST) threads the bilayer. Topologically, residues 269 to 271 (ATF) are cytoplasmic. A helical membrane pass occupies residues 272–292 (FFFVYLTLFVVIGFFSSLFII). Residue P293 is a topological domain, lumenal. A helical transmembrane segment spans residues 294-314 (LLGISFVFAIGVVSFGFCSNM). The Cytoplasmic segment spans residues 315-412 (SFKMAQLIYV…NKAGNKFQLS (98 aa)). Positions 347 to 374 (QEPQEPLSTLRPVSNPTIPSPLRQTARP) are disordered. A compositionally biased stretch (polar residues) spans 357–373 (RPVSNPTIPSPLRQTAR).

As to quaternary structure, interacts specifically with the seipin complex FLD1-LDB16. Only a fraction appears to associate with the seipin core components, suggesting that it may be an ancillary subunit of the complex.

It is found in the endoplasmic reticulum membrane. It localises to the lipid droplet. Its function is as follows. Involved in lipid droplet (LD) organization. Modulates triglyceride (TAG) storage by reducing DGA1 LD localization. Promotes LD targeting of some proteins, including PDR16. The sequence is that of Lipid droplet organization protein LDO45 from Saccharomyces cerevisiae (strain ATCC 204508 / S288c) (Baker's yeast).